We begin with the raw amino-acid sequence, 966 residues long: Receptor protein-tyrosine kinase CEPR1 (966 aa).

A signal peptide spans 1 to 22 (MRLKNFPFFVLFFFFCFNSNQS). At 23 to 592 (WGLMSSNQQP…QEPHGKKKLS (570 aa)) the chain is on the extracellular side. N-linked (GlcNAc...) asparagine glycosylation is present at asparagine 61. LRR repeat units lie at residues 70-94 (QGLV…VCSY), 95-120 (FPNL…TIPN), 122-144 (SLLR…FSQM), 145-168 (KSLR…IFNL), 170-194 (DLEY…VSKL), 195-218 (TKLT…IGNL), 219-242 (TSLV…IGNL), 245-267 (LRQL…IGNL), 268-291 (KNLT…ICSL), 292-315 (PNLR…LGNS), 317-339 (TLKI…LGSS), 341-363 (PMIA…VCKS), 365-386 (KLLY…TYGS), 387-411 (CKTL…VMSL), 412-435 (PHVS…IGNA), 437-459 (NLSE…LSHS), 460-483 (TNLV…VGRL), 484-507 (RKLN…LSNL), 508-531 (KSLN…LSEL), and 533-554 (PTSI…LIRG). N-linked (GlcNAc...) asparagine glycosylation is found at asparagine 109, asparagine 120, asparagine 128, and asparagine 167. Residues asparagine 217 and asparagine 241 are each glycosylated (N-linked (GlcNAc...) asparagine). Asparagine 269 and asparagine 301 each carry an N-linked (GlcNAc...) asparagine glycan. Asparagine 437 carries an N-linked (GlcNAc...) asparagine glycan. N-linked (GlcNAc...) asparagine glycosylation is found at asparagine 527 and asparagine 537. A helical membrane pass occupies residues 593–613 (SIWAILVSVFILVLGVIMFYL). Residues 614-966 (RQRMSKNRAV…VSDHLTQTRL (353 aa)) lie on the Cytoplasmic side of the membrane. The Protein kinase domain occupies 656–934 (LVDKNIVGHG…TMNEVVQLLI (279 aa)). ATP-binding positions include 662–670 (VGHGGSGTV) and lysine 684. 2 positions are modified to phosphotyrosine: tyrosine 738 and tyrosine 775. Aspartate 788 acts as the Proton acceptor in catalysis. A phosphotyrosine mark is found at tyrosine 831 and tyrosine 838. Residues 937–966 (TPQGGPDMTSKPTTKIKDSIVSDHLTQTRL) form a disordered region.

This sequence belongs to the protein kinase superfamily. Ser/Thr protein kinase family. Interacts with the root-derived peptides CEP1, CEP3 and CEP5. Expressed in the vasculature, especially in phloem and procambium regions, of stems, leaves, cotyledons, sepals, pedals, pedicels, hypocotyls and roots (in primary and lateral roots, but not in root tips). Expressed in the root from the basal meristem onward. Present in the phloem pole pericycle and in the adjacent phloem.

The protein resides in the cell membrane. It catalyses the reaction L-tyrosyl-[protein] + ATP = O-phospho-L-tyrosyl-[protein] + ADP + H(+). Its function is as follows. Receptor kinase involved in the perception of C-terminally encoded plant signaling peptide (CEP) and subsequent regulation of root and shoot development. Required for xylem and phloem cell files morphology and organization, probably by preventing ectopic lignification in phloem cells. Together with CEPR2, mediates systemic nitrogen (N)-demand signaling upon the perception of root-derived peptides (e.g. CEP1) via the up-regulation of genes involved in N uptake and assimilation pathways. Positively regulates lateral root initiation and development; probably repressed by the signaling peptide CEP5. This is Receptor protein-tyrosine kinase CEPR1 from Arabidopsis thaliana (Mouse-ear cress).